Consider the following 251-residue polypeptide: Probable transcriptional regulatory protein Arth_2304 (251 aa).

Belongs to the TACO1 family.

The protein localises to the cytoplasm. The chain is Probable transcriptional regulatory protein Arth_2304 from Arthrobacter sp. (strain FB24).